A 332-amino-acid chain; its full sequence is 5-dehydro-2-deoxygluconokinase 2 (332 aa).

Belongs to the carbohydrate kinase PfkB family.

It carries out the reaction 5-dehydro-2-deoxy-D-gluconate + ATP = 6-phospho-5-dehydro-2-deoxy-D-gluconate + ADP + H(+). It functions in the pathway polyol metabolism; myo-inositol degradation into acetyl-CoA; acetyl-CoA from myo-inositol: step 5/7. Catalyzes the phosphorylation of 5-dehydro-2-deoxy-D-gluconate (2-deoxy-5-keto-D-gluconate or DKG) to 6-phospho-5-dehydro-2-deoxy-D-gluconate (DKGP). This Bacillus cereus (strain ZK / E33L) protein is 5-dehydro-2-deoxygluconokinase 2.